The sequence spans 506 residues: Glutamate--tRNA ligase (506 aa).

The 'HIGH' region motif lies at Pro-12 to Thr-22. A 'KMSKS' region motif is present at residues Lys-253–Arg-257. Lys-256 contributes to the ATP binding site.

This sequence belongs to the class-I aminoacyl-tRNA synthetase family. Glutamate--tRNA ligase type 1 subfamily. In terms of assembly, monomer.

It localises to the cytoplasm. The catalysed reaction is tRNA(Glu) + L-glutamate + ATP = L-glutamyl-tRNA(Glu) + AMP + diphosphate. Catalyzes the attachment of glutamate to tRNA(Glu) in a two-step reaction: glutamate is first activated by ATP to form Glu-AMP and then transferred to the acceptor end of tRNA(Glu). The sequence is that of Glutamate--tRNA ligase from Chlamydia muridarum (strain MoPn / Nigg).